Consider the following 107-residue polypeptide: MDLNNRLSEDETLEQAYDIFLELAVDNLDPADVILFNLQFEERGGAELHDPAEDWAEHVDFDLNPDFFAEVLIGLGEADGEPITDVFARVLICREKDHKLCHILWKE.

The protein belongs to the putative dsDNA mimic protein family.

Its function is as follows. May act as a double-stranded DNA (dsDNA) mimic. Probably regulates the activity of a dsDNA-binding protein. The chain is Putative double-stranded DNA mimic protein ETA_15890 from Erwinia tasmaniensis (strain DSM 17950 / CFBP 7177 / CIP 109463 / NCPPB 4357 / Et1/99).